Consider the following 132-residue polypeptide: MGRVRTKTTKRASRVVIEKYYPRLTLDFQTNKRIVDEVAIIASKRLRNKIAGYTTHLMKRIQRGPVRGISFKLQEEERERKDQYVPEVSELEKDKINVDQDTKDMLKALGYDSIPTVVVAASRPERPFRYRH.

S43 is modified (phosphoserine).

Belongs to the eukaryotic ribosomal protein eS17 family. As to quaternary structure, component of the small ribosomal subunit (SSU). Mature yeast ribosomes consist of a small (40S) and a large (60S) subunit. The 40S small subunit contains 1 molecule of ribosomal RNA (18S rRNA) and at least 33 different proteins. The large 60S subunit contains 3 rRNA molecules (25S, 5.8S and 5S rRNA) and at least 46 different proteins.

Its subcellular location is the cytoplasm. Its function is as follows. Component of the ribosome, a large ribonucleoprotein complex responsible for the synthesis of proteins in the cell. The small ribosomal subunit (SSU) binds messenger RNAs (mRNAs) and translates the encoded message by selecting cognate aminoacyl-transfer RNA (tRNA) molecules. The large subunit (LSU) contains the ribosomal catalytic site termed the peptidyl transferase center (PTC), which catalyzes the formation of peptide bonds, thereby polymerizing the amino acids delivered by tRNAs into a polypeptide chain. The nascent polypeptides leave the ribosome through a tunnel in the LSU and interact with protein factors that function in enzymatic processing, targeting, and the membrane insertion of nascent chains at the exit of the ribosomal tunnel. The sequence is that of Small ribosomal subunit protein eS17B (rps1702) from Schizosaccharomyces pombe (strain 972 / ATCC 24843) (Fission yeast).